The following is a 1151-amino-acid chain: Importin beta (1151 aa).

HEAT repeat units follow at residues 1–36 (MDLASFQNLLQQCQTEQDTQKRKEVEDFYFKYKQEE), 37–82 (PASY…GNGN), 83–132 (PECV…VAQF), 133–175 (PEFF…TKIG), 176–222 (GKAI…DSVI), 223–269 (PNSV…AVLK), 270–316 (PMVK…RAKK), 317–377 (AISE…KVIF), 378–416 (PLIKDFVSYAKANPTVHNCFAVANIFTITAEGLARLVTK), 417–453 (EDIVFTIDTLLELSNHPHQRVRYSVLSAIGQLSEDYA), 454–495 (PTFQ…HLKK), 496–540 (AETY…LKND), 541–593 (FADM…AGTL), 594–642 (PQLF…PETF), 643–704 (PKYM…MRKT), 705–756 (PAAF…TVAS), 757–811 (PPAV…SYTE), 812–880 (TVNK…ALGD), 881–932 (LSLD…KYLS), 933–978 (PANS…YEGD), 979–1027 (PGLA…AQAF), 1028–1074 (PTEL…ARND), 1075–1120 (PNFM…VLTQ), and 1121–1151 (IAGHGTILADTIAKCSEYVQKTYSLYTSVRQ).

This sequence belongs to the importin beta family.

The protein resides in the nucleus intermembrane space. Its subcellular location is the cytoplasm. It localises to the nucleus. In terms of biological role, functions in nuclear protein import as nuclear transport receptor. Involved in encystation process. Constitutive expression enhances cyst production and increases transcription of endogenous genes involved in encystation. Level of mRNA of the transcriptional factor myb1-like protein increases in early stages of the encystation process followed by increased mRNAs of the cyst wall proteins cwp1-3. This is Importin beta from Giardia intestinalis (strain ATCC 50803 / WB clone C6) (Giardia lamblia).